Reading from the N-terminus, the 183-residue chain is Endoribonuclease YbeY (183 aa).

3 residues coordinate Zn(2+): His-143, His-147, and His-153.

Belongs to the endoribonuclease YbeY family. Zn(2+) serves as cofactor.

It is found in the cytoplasm. Its function is as follows. Single strand-specific metallo-endoribonuclease involved in late-stage 70S ribosome quality control and in maturation of the 3' terminus of the 16S rRNA. The protein is Endoribonuclease YbeY of Rickettsia bellii (strain OSU 85-389).